The sequence spans 2476 residues: Non-reducing polyketide synthase ausA (2476 aa).

The N-terminal acylcarrier protein transacylase domain (SAT) stretch occupies residues 14–253 (VLFGPKYPEV…HHSNHTQAVE (240 aa)). Positions 379–795 (AVPIAVTGMA…GSNAAIVLRE (417 aa)) constitute a Ketosynthase family 3 (KS3) domain. Catalysis depends on for beta-ketoacyl synthase activity residues Cys544, His679, and His718. Residues 906 to 1210 (ICFGGQTGDT…LPTDLSGAQA (305 aa)) form a malonyl-CoA:ACP transacylase (MAT) domain region. The active-site For acyl/malonyl transferase activity is Ser993. An N-terminal hotdog fold region spans residues 1277–1405 (QEASLVRLLR…GRVSLQAAGS (129 aa)). One can recognise a PKS/mFAS DH domain in the interval 1277–1584 (QEASLVRLLR…FTGVSIQSLK (308 aa)). The segment at 1280-1583 (SLVRLLRQDG…TFTGVSIQSL (304 aa)) is product template (PT) domain. His1310 acts as the Proton acceptor; for dehydratase activity in catalysis. A C-terminal hotdog fold region spans residues 1433–1584 (SSSGLKRSTV…FTGVSIQSLK (152 aa)). Catalysis depends on Asp1491, which acts as the Proton donor; for dehydratase activity. A Carrier domain is found at 1626 to 1700 (DGDLLAVQTM…GLVQRIFPGH (75 aa)). O-(pantetheine 4'-phosphoryl)serine is present on Ser1660. A methyltransferase (CMeT) domain region spans residues 1862–2095 (QHASEHKLLH…GFNWVDWTDN (234 aa)). Residues 2128 to 2476 (NTVQEQTVLY…YEFLRRHVGL (349 aa)) are thioesterase (TE) domain. Active-site for thioesterase activity residues include Ser2251, Asp2413, and His2445.

It catalyses the reaction 3 malonyl-CoA + acetyl-CoA + 2 S-adenosyl-L-methionine = 3,5-dimethylorsellinate + 2 S-adenosyl-L-homocysteine + 3 CO2 + 4 CoA. It functions in the pathway secondary metabolite biosynthesis; terpenoid biosynthesis. In terms of biological role, non-reducing polyketide synthase; part of the gene cluster A that mediates the biosynthesis of austinol and dehydroaustinol, two fungal meroterpenoids. The first step of the pathway is the synthesis of 3,5-dimethylorsellinic acid by the polyketide synthase ausA. 3,5-dimethylorsellinic acid is then prenylated by the polyprenyl transferase ausN. Further epoxidation by the FAD-dependent monooxygenase ausM and cyclization by the probable terpene cyclase ausL lead to the formation of protoaustinoid A. Protoaustinoid A is then oxidized to spiro-lactone preaustinoid A3 by the combined action of the FAD-binding monooxygenases ausB and ausC, and the dioxygenase ausE. Acid-catalyzed keto-rearrangement and ring contraction of the tetraketide portion of preaustinoid A3 by ausJ lead to the formation of preaustinoid A4. The aldo-keto reductase ausK, with the help of ausH, is involved in the next step by transforming preaustinoid A4 into isoaustinone which is in turn hydroxylated by the P450 monooxygenase ausI to form austinolide. Finally, the cytochrome P450 monooxygenase ausG modifies austinolide to austinol. Austinol can be further modified to dehydroaustinol which forms a diffusible complex with diorcinol that initiates conidiation. Due to genetic rearrangements of the clusters and the subsequent loss of some enzymes, the end products of the Emericella nidulans austinoid biosynthesis clusters are austinol and dehydroaustinol, even if additional enzymes, such as the O-acetyltransferase ausQ and the cytochrome P450 monooxygenase ausR are still functional. This is Non-reducing polyketide synthase ausA from Emericella nidulans (strain FGSC A4 / ATCC 38163 / CBS 112.46 / NRRL 194 / M139) (Aspergillus nidulans).